Here is a 264-residue protein sequence, read N- to C-terminus: Phosphate import ATP-binding protein PstB (264 aa).

The 240-residue stretch at 11 to 250 folds into the ABC transporter domain; sequence LKAEALSVYY…DTTEKIFDSP (240 aa). An ATP-binding site is contributed by 43 to 50; sequence GPSGCGKS.

It belongs to the ABC transporter superfamily. Phosphate importer (TC 3.A.1.7) family. The complex is composed of two ATP-binding proteins (PstB), two transmembrane proteins (PstC and PstA) and a solute-binding protein (PstS).

The protein resides in the cell inner membrane. The enzyme catalyses phosphate(out) + ATP + H2O = ADP + 2 phosphate(in) + H(+). Part of the ABC transporter complex PstSACB involved in phosphate import. Responsible for energy coupling to the transport system. In Synechococcus elongatus (strain ATCC 33912 / PCC 7942 / FACHB-805) (Anacystis nidulans R2), this protein is Phosphate import ATP-binding protein PstB.